The following is a 998-amino-acid chain: Regulator of telomere elongation helicase 1 homolog (998 aa).

Positions 7–324 (AGIPVHFPFE…KEMLLELEKA (318 aa)) constitute a Helicase ATP-binding domain. 42-49 (SPTGTGKT) is a binding site for ATP. The [4Fe-4S] cluster site is built by Cys148, Cys166, Cys175, and Cys211. A DEAH box motif is present at residues 254–257 (DEAH). The segment at 426-454 (QNAGKPAPKQQQQGGWLGKGNNTSNSSSS) is disordered. Thr887 carries the phosphothreonine modification.

Belongs to the helicase family. RAD3/XPD subfamily.

The protein localises to the nucleus. The catalysed reaction is ATP + H2O = ADP + phosphate + H(+). In terms of biological role, a probable ATP-dependent DNA helicase implicated in DNA repair and the maintenance of genomic stability. Acts as an anti-recombinase to counteract toxic recombination and limit crossover during meiosis. Regulates meiotic recombination and crossover homeostasis by physically dissociating strand invasion events and thereby promotes noncrossover repair by meiotic synthesis dependent strand annealing (SDSA) as well as disassembly of D loop recombination intermediates. This is Regulator of telomere elongation helicase 1 homolog from Drosophila willistoni (Fruit fly).